The chain runs to 197 residues: Phosphoheptose isomerase (197 aa).

Positions 41 to 197 (VVETFRRGGK…EIVERTLFEE (157 aa)) constitute an SIS domain. Residue 56–58 (NGG) participates in substrate binding. Zn(2+) is bound by residues His-65 and Glu-69. Substrate contacts are provided by residues Glu-69, 98–99 (ND), 124–126 (STS), Ser-129, and Gln-176. Residues Gln-176 and His-184 each contribute to the Zn(2+) site.

It belongs to the SIS family. GmhA subfamily. Zn(2+) is required as a cofactor.

Its subcellular location is the cytoplasm. It catalyses the reaction 2 D-sedoheptulose 7-phosphate = D-glycero-alpha-D-manno-heptose 7-phosphate + D-glycero-beta-D-manno-heptose 7-phosphate. It participates in carbohydrate biosynthesis; D-glycero-D-manno-heptose 7-phosphate biosynthesis; D-glycero-alpha-D-manno-heptose 7-phosphate and D-glycero-beta-D-manno-heptose 7-phosphate from sedoheptulose 7-phosphate: step 1/1. Its function is as follows. Catalyzes the isomerization of sedoheptulose 7-phosphate in D-glycero-D-manno-heptose 7-phosphate. The protein is Phosphoheptose isomerase of Roseiflexus sp. (strain RS-1).